The following is a 309-amino-acid chain: GTPase Era (309 aa).

An Era-type G domain is found at 16 to 186; the sequence is HAGFVAIVGK…REQILDALPE (171 aa). Residues 24–31 form a G1 region; it reads GKPNVGKS. Position 24 to 31 (24 to 31) interacts with GTP; that stretch reads GKPNVGKS. Positions 50–54 are G2; the sequence is QTTRR. A G3 region spans residues 71–74; that stretch reads DTPG. GTP is bound by residues 71-75 and 133-136; these read DTPGL and NKVD. Positions 133–136 are G4; the sequence is NKVD. Residues 164–166 are G5; sequence LSA. Positions 217-294 constitute a KH type-2 domain; that stretch reads LREELPYAVA…FLGLEVIVIP (78 aa).

It belongs to the TRAFAC class TrmE-Era-EngA-EngB-Septin-like GTPase superfamily. Era GTPase family. As to quaternary structure, monomer.

The protein resides in the cytoplasm. It is found in the cell membrane. Functionally, an essential GTPase that binds both GDP and GTP, with rapid nucleotide exchange. Plays a role in 16S rRNA processing and 30S ribosomal subunit biogenesis and possibly also in cell cycle regulation and energy metabolism. In Deinococcus geothermalis (strain DSM 11300 / CIP 105573 / AG-3a), this protein is GTPase Era.